A 427-amino-acid polypeptide reads, in one-letter code: Histidinol dehydrogenase (427 aa).

NAD(+) contacts are provided by Tyr-127, Gln-187, and Asn-210. The substrate site is built by Ser-233, Gln-255, and His-258. Zn(2+) is bound by residues Gln-255 and His-258. Active-site proton acceptor residues include Glu-323 and His-324. Substrate is bound by residues His-324, Asp-357, Glu-411, and His-416. Asp-357 contacts Zn(2+). His-416 is a Zn(2+) binding site.

Belongs to the histidinol dehydrogenase family. Zn(2+) is required as a cofactor.

The catalysed reaction is L-histidinol + 2 NAD(+) + H2O = L-histidine + 2 NADH + 3 H(+). The protein operates within amino-acid biosynthesis; L-histidine biosynthesis; L-histidine from 5-phospho-alpha-D-ribose 1-diphosphate: step 9/9. Catalyzes the sequential NAD-dependent oxidations of L-histidinol to L-histidinaldehyde and then to L-histidine. This is Histidinol dehydrogenase from Streptococcus mutans serotype c (strain ATCC 700610 / UA159).